Reading from the N-terminus, the 407-residue chain is Nuclear hormone receptor family member nhr-134 (407 aa).

The NR C4-type zinc-finger motif lies at 11–31; the sequence is CEICGQKTSGRHFGVMSCRSC. The segment at 47–66 adopts an NR C4-type; degenerate zinc-finger fold; it reads RCPNGNCKLLENGKFKCKKC. In terms of domain architecture, NR LBD spans 157 to 407; that stretch reads QFHNSLERLA…FSEPDMFEST (251 aa).

It belongs to the nuclear hormone receptor family.

It localises to the nucleus. Orphan nuclear receptor. The polypeptide is Nuclear hormone receptor family member nhr-134 (nhr-134) (Caenorhabditis elegans).